We begin with the raw amino-acid sequence, 91 residues long: uncharacterized protein (91 aa).

The next 2 membrane-spanning stretches (helical) occupy residues 10–30 and 46–66; these read VLFTAPGLIVGALAIGAAGGI and LLVAVLFVGAFTGIMVEQALS. A disordered region spans residues 68 to 91; the sequence is MRRQDGARGTARAGRNSARRRMPS.

The protein localises to the cell membrane. This is an uncharacterized protein from Sinorhizobium fredii (strain NBRC 101917 / NGR234).